A 76-amino-acid polypeptide reads, in one-letter code: uncharacterized protein (76 aa).

This is an uncharacterized protein from Methanocaldococcus jannaschii (strain ATCC 43067 / DSM 2661 / JAL-1 / JCM 10045 / NBRC 100440) (Methanococcus jannaschii).